The following is a 247-amino-acid chain: Cell division protein ZapD (247 aa).

It belongs to the ZapD family. As to quaternary structure, interacts with FtsZ.

The protein localises to the cytoplasm. In terms of biological role, cell division factor that enhances FtsZ-ring assembly. Directly interacts with FtsZ and promotes bundling of FtsZ protofilaments, with a reduction in FtsZ GTPase activity. The protein is Cell division protein ZapD of Salmonella agona (strain SL483).